A 275-amino-acid polypeptide reads, in one-letter code: Glucan endo-1,3-beta-glucosidase, acidic isoform PR-N (275 aa).

E196 serves as the catalytic Nucleophile.

The protein belongs to the glycosyl hydrolase 17 family. Post-translationally, the N-terminus is blocked.

It is found in the secreted. The protein localises to the extracellular space. The catalysed reaction is Hydrolysis of (1-&gt;3)-beta-D-glucosidic linkages in (1-&gt;3)-beta-D-glucans.. Implicated in the defense of plants against pathogens. The polypeptide is Glucan endo-1,3-beta-glucosidase, acidic isoform PR-N (PRN) (Nicotiana tabacum (Common tobacco)).